The following is a 177-amino-acid chain: RNA pyrophosphohydrolase (177 aa).

The Nudix hydrolase domain occupies 6 to 149 (GYRPNVGIVI…KRDVYRRVMK (144 aa)). Positions 38–59 (GGINAGETAEQAMYRELFEEVG) match the Nudix box motif.

The protein belongs to the Nudix hydrolase family. RppH subfamily. It depends on a divalent metal cation as a cofactor.

Its function is as follows. Accelerates the degradation of transcripts by removing pyrophosphate from the 5'-end of triphosphorylated RNA, leading to a more labile monophosphorylated state that can stimulate subsequent ribonuclease cleavage. This chain is RNA pyrophosphohydrolase, found in Edwardsiella ictaluri (strain 93-146).